The primary structure comprises 180 residues: Regulator of G-protein signaling 8 (180 aa).

Serine 26 is modified (phosphoserine). Positions 56–171 constitute an RGS domain; that stretch reads SFDVLLSHKY…FLRSKMYLDL (116 aa).

Interacts with GNAO1. Interacts with GNAI3.

It is found in the cell membrane. Its subcellular location is the membrane. It localises to the perikaryon. The protein resides in the cell projection. The protein localises to the dendrite. It is found in the nucleus. In terms of biological role, regulates G protein-coupled receptor signaling cascades, including signaling via muscarinic acetylcholine receptor CHRM2 and dopamine receptor DRD2. Inhibits signal transduction by increasing the GTPase activity of G protein alpha subunits, thereby driving them into their inactive GDP-bound form. Modulates the activity of potassium channels that are activated in response to DRD2 and CHRM2 signaling. The sequence is that of Regulator of G-protein signaling 8 (RGS8) from Homo sapiens (Human).